The chain runs to 443 residues: Diels-Alderase poxQ (443 aa).

The N-terminal stretch at 1–23 (MARIPLEFLSITLPVLLLAYCLA) is a signal peptide. N-linked (GlcNAc...) asparagine glycosylation is found at N78, N97, and N145.

This sequence belongs to the Diels-Alderase family.

Its pathway is secondary metabolite biosynthesis. Diels-Alderase; part of the gene cluster that mediates the biosynthesis of oxaleimides, cytotoxic compounds containing an unusual disubstituted succinimide moiety. The first step of the pathway is provided by the HR-PKS poxF that serves in a new mode of collaborative biosynthesis with the PKS-NRPS poxE, by providing the olefin containing amino acid substrate via the synthesis of an ACP-bound dec-4-enoate. The cytochrome P450 monooxygenase poxM-catalyzed oxidation at the alpha-position creates the enzyme-bound 2-hydroxydec-4-enoyl-ACP thioester, which may be prone to spontaneous hydrolysis to yield 2-hydroxydec-4-enoic acid due to increased electrophilicity of the carbonyl. 2-hydroxydec-4-enoic acid can then be further oxidized by poxM to yield the alpha-ketoacid 2-oxodec-4-enoicacid, which is reductively aminated by the aminotransferase poxL to yield (S,E)-2-aminodec-4-enoic acid. The Hybrid PKS-NRPS synthetase poxE then performs condensation between the octaketide product of its PKS modules and the amino group of (S,E)-2-aminodec-4-enoic acid which is activated and incorporated by the adenylation domain. The resulting aminoacyl product can be cyclized by the Diels-Alderase PoxQ and reductively released by the reductive (R) domain of poxE to yield an aldehyde intermediate. The released aldehyde is then substrate for a Knoevenagel condensation by the hydrolyase poxO followed by an oxidation at the 5-position of the pyrrolidone ring. The presence of the olefin from the amino acid building block allows for migration of the substituted allyl group to occur. This allylic transposition reaction takes place in a conjugate addition, semipinacol-like fashion to yield a succinimide intermediate. Iterative two-electron oxidations of the C7 methyl of the succinimide intermediate to the carboxylic acid can be catalyzed by one of two remaining cytochrome P450 monooxygenasess poxC or poxD to yield oxaleimide A. Subsequent oxidation yields the maleimide scaffold oxaleimide I. Both oxaleimide A and oxaleimide I can undergo oxidative modifications in the decalin ring to yield the series of products oxaleimides B to H. The chain is Diels-Alderase poxQ from Penicillium oxalicum (strain 114-2 / CGMCC 5302) (Penicillium decumbens).